The chain runs to 1527 residues: Lysophospholipase nte1 (1527 aa).

Residues 1-73 (MADSGASVPS…SPPTPTTMVG (73 aa)) are Cytoplasmic-facing. The chain crosses the membrane as a helical span at residues 74 to 94 (WIGWVFSLVFQTIPSVLYWVI). Residues 95–116 (TFSTITLPTWLFTLFSMSLTFT) lie on the Lumenal side of the membrane. Residues 117–137 (MNFTTLLLIVLGLVSTVSWFI) traverse the membrane as a helical segment. At 138-1527 (RYRFLNMYSR…RTLAPRRASI (1390 aa)) the chain is on the cytoplasmic side. A compositionally biased stretch (low complexity) spans 299–310 (GSSSSMSSVQPS). 3 disordered regions span residues 299–387 (GSSS…RRKS), 567–596 (DQFA…QRKD), and 765–785 (ATSR…KKPS). Polar residues predominate over residues 364–377 (RASSYHPNGQSTAS). A nucleoside 3',5'-cyclic phosphate-binding positions include 682–809 (GGTS…SYRS) and 846–966 (RLTG…IAQR). The region spanning 1224–1388 (LVLGGGGARG…IDNLTVAHMK (165 aa)) is the PNPLA domain. The GXGXXG motif lies at 1228–1233 (GGGARG). The GXSXG motif lies at 1255–1259 (GTSIG). Residue Ser-1257 is the Nucleophile of the active site. The Proton acceptor role is filled by Asp-1375. Residues 1375–1377 (DGG) carry the DGA/G motif. The tract at residues 1504–1527 (LPLPEENEEKKKLQRTLAPRRASI) is disordered.

This sequence belongs to the NTE family.

It localises to the endoplasmic reticulum membrane. It catalyses the reaction a 1-acyl-sn-glycero-3-phosphocholine + H2O = sn-glycerol 3-phosphocholine + a fatty acid + H(+). Inhibited by organophosphorus esters. Functionally, intracellular phospholipase B that catalyzes the double deacylation of phosphatidylcholine (PC) to glycerophosphocholine (GroPCho). Plays an important role in membrane lipid homeostasis. Responsible for the rapid PC turnover in response to inositol, elevated temperatures, or when choline is present in the growth medium. This Emericella nidulans (strain FGSC A4 / ATCC 38163 / CBS 112.46 / NRRL 194 / M139) (Aspergillus nidulans) protein is Lysophospholipase nte1 (nte1).